Reading from the N-terminus, the 181-residue chain is Interleukin-10 (181 aa).

A signal peptide spans 1 to 19; that stretch reads MHGSALLCCCLVLLAGVGA. 2 cysteine pairs are disulfide-bonded: Cys31-Cys129 and Cys81-Cys135. Asn137 is a glycosylation site (N-linked (GlcNAc...) asparagine).

The protein belongs to the IL-10 family. Homodimer. Interacts with IL10RA and IL10RB.

The protein resides in the secreted. Its function is as follows. Major immune regulatory cytokine that acts on many cells of the immune system where it has profound anti-inflammatory functions, limiting excessive tissue disruption caused by inflammation. Mechanistically, IL10 binds to its heterotetrameric receptor comprising IL10RA and IL10RB leading to JAK1 and STAT2-mediated phosphorylation of STAT3. In turn, STAT3 translocates to the nucleus where it drives expression of anti-inflammatory mediators. Targets antigen-presenting cells (APCs) such as macrophages and monocytes and inhibits their release of pro-inflammatory cytokines including granulocyte-macrophage colony-stimulating factor /GM-CSF, granulocyte colony-stimulating factor/G-CSF, IL-1 alpha, IL-1 beta, IL-6, IL-8 and TNF-alpha. Also interferes with antigen presentation by reducing the expression of MHC-class II and co-stimulatory molecules, thereby inhibiting their ability to induce T cell activation. In addition, controls the inflammatory response of macrophages by reprogramming essential metabolic pathways including mTOR signaling. This is Interleukin-10 (IL10) from Canis lupus familiaris (Dog).